Here is an 884-residue protein sequence, read N- to C-terminus: Probable mixed-linked glucan synthase 9 (884 aa).

The span at 1-27 (MALSPAAAGRTGRNNNNDAGLADPLLP) shows a compositional bias: low complexity. The segment at 1–34 (MALSPAAAGRTGRNNNNDAGLADPLLPAGGGGGG) is disordered. 2 consecutive transmembrane segments (helical) span residues 73 to 93 (VLLH…VLFL) and 104 to 124 (AMWL…TWLL). D195 is a catalytic residue. Positions 396 and 398 each coordinate substrate. The active site involves D565. 6 helical membrane passes run 640 to 660 (TAYP…VIWL), 672 to 692 (FSTY…IGLV), 708 to 728 (EQFY…HIVL), 765 to 785 (LLAP…AAAG), 802 to 822 (AGLV…LGIM), and 830 to 850 (CALF…FVAV).

It belongs to the glycosyltransferase 2 family. Plant cellulose synthase-like F subfamily.

Its subcellular location is the golgi apparatus membrane. In terms of biological role, may catalyze both beta-1,3 and beta-1,4 glycosidic linkage on beta-D-glucan. Essential for (1,3;1,4)-beta-D-glucans synthesis in grasses and cereals (Poaceae). The mixed-linked glucans (which are not present in walls of dicotyledons or most other monocotyledonous plants) are particularly important constituents of the walls of the starchy endosperm and aleurone cells of cereal grains such as oats, wheat, rice and barley. They can account for up to 70% by weight of the wall. The chain is Probable mixed-linked glucan synthase 9 (CSLF9) from Oryza sativa subsp. japonica (Rice).